The primary structure comprises 88 residues: Putative septation protein SpoVG (88 aa).

The protein belongs to the SpoVG family.

Its function is as follows. Could be involved in septation. In Desulforudis audaxviator (strain MP104C), this protein is Putative septation protein SpoVG.